Consider the following 528-residue polypeptide: MAKKILYQDNARKALEKGMDTLVEAVAITLGPKGRNVVLERKFGAPQIINDGVTIAKEIELQDLAENTGVALIRQAASKTNDVAGDGTTTATVLAHAIVKQGLKNVAAGANPITLKKGIQKAVKFVVGKIAEYSKPICSMQDVTHIGSISSGNDVEVGTMIANAIQQVGKEGIISLEEGQSTSTELDIKEGMKFDKGFISPYFVTDTSRMEVIQDNPYILITDKKITLIQQELLPILEKVTKTGRPLLIIAEDIEKEALATIIVNKLRGIINVVAVRAPGFGDRRKLLLEDIAILTSGVVITQDMGLSLDSMSLDQLGSARRVQITKDSTTIVADAQKDLIQARCDQIRRQLEAATNSYAKDKLHERLAKLSGGVAVVKVGAATETEMRDKKLRLEDAINATKAAIEEGIVPGGGSTFVHLSEVLRVWAINNLVEEELVGALIIVDSLLHPLKRIVENAGNNGSIIIEKIKNSNFSTGYNADIGQIVDMYKEGIIDPAKVTRSALQNAASIASMILTTECLIAEQVDN.

ATP-binding positions include 29–32 (TLGP), 86–90 (DGTTT), Gly-414, and Asp-496.

The protein belongs to the chaperonin (HSP60) family. Forms a cylinder of 14 subunits composed of two heptameric rings stacked back-to-back. Interacts with the co-chaperonin GroES.

Its subcellular location is the plastid. It is found in the chloroplast. The catalysed reaction is ATP + H2O + a folded polypeptide = ADP + phosphate + an unfolded polypeptide.. Its function is as follows. Together with its co-chaperonin GroES, plays an essential role in assisting protein folding. The GroEL-GroES system forms a nano-cage that allows encapsulation of the non-native substrate proteins and provides a physical environment optimized to promote and accelerate protein folding. The sequence is that of Chaperonin GroEL, chloroplastic from Gracilaria tenuistipitata var. liui (Red alga).